A 433-amino-acid chain; its full sequence is Sulfhydrylase FUB7 (433 aa).

Position 211 is an N6-(pyridoxal phosphate)lysine (Lys211).

It belongs to the trans-sulfuration enzymes family. Pyridoxal 5'-phosphate serves as cofactor.

It functions in the pathway mycotoxin biosynthesis. Its function is as follows. Sulfhydrylase; part of the gene cluster that mediates the biosynthesis of fusaric acid, a mycotoxin with low to moderate toxicity to animals and humans, but with high phytotoxic properties. L-aspartate is suggested as fusaric acid amino acid precursor that is activated and further processed to O-acetyl-L-homoserine by cluster enzymes aspartate kinase FUB3 and homoserine O-acetyltransferase FUB5, as well as enzymes of the primary metabolism. The polyketide synthase (PKS) FUB1 generates the triketide trans-2-hexenal which is presumptively released by the hydrolase FUB4 and linked to the NRPS-bound amino acid precursor by NAD(P)-dependent dehydrogenase FUB6. FUB1, FUB4, and the non-canonical NRPS Fub8 may form an enzyme complex. Further processing of the NRPS-bound intermediate might be carried out by FUB6 and the sulfhydrylase FUB7, enabling a spontaneous electrocyclization to close the carbon backbone of fusaric acid. Dihydrofusaric acid is likely to be released via reduction by the thioester reductase (TR) domain of FUB8 whereupon the final oxidation to fusaric acid may (also) be performed by the FMN-dependent dehydrogenase FUB9. This is Sulfhydrylase FUB7 from Fusarium oxysporum f. sp. lycopersici (strain 4287 / CBS 123668 / FGSC 9935 / NRRL 34936) (Fusarium vascular wilt of tomato).